The following is a 328-amino-acid chain: Aryl-hydrocarbon-interacting protein-like 1 (328 aa).

The PPIase FKBP-type domain occupies 53–145 (KQVGHPMHII…DLDELQKEPQ (93 aa)). 3 TPR repeats span residues 178–211 (VPIL…LRNL), 230–263 (NTLI…HPGI), and 264–297 (VKAY…EPSM).

In terms of assembly, directly interacts with NUB1.

The protein localises to the cytoplasm. Its subcellular location is the nucleus. Functionally, may be important in protein trafficking and/or protein folding and stabilization. The polypeptide is Aryl-hydrocarbon-interacting protein-like 1 (AIPL1) (Bos taurus (Bovine)).